The chain runs to 112 residues: uncharacterized protein (112 aa).

This is an uncharacterized protein from Aquifex aeolicus (strain VF5).